We begin with the raw amino-acid sequence, 332 residues long: Terpene synthase 1 (332 aa).

Positions 81 to 86 (DDGLDA) match the DDxx(x)D/E motif motif. Residues 221–229 (NDLVSYEKE) carry the NDxxSxxxD/E motif motif.

It belongs to the terpene synthase family.

It catalyses the reaction (2E,6E)-farnesyl diphosphate = (2S,3R,6S,9S)-(-)-protoillud-7-ene + diphosphate. Its function is as follows. Terpene synthase that converts its substrate farnesyl diphosphate (FPP) into the sesquiterpene protoillud-7-ene. This chain is Terpene synthase 1, found in Acytostelium subglobosum (Slime mold).